We begin with the raw amino-acid sequence, 169 residues long: S-ribosylhomocysteine lyase (169 aa).

Residues His-54, His-58, and Cys-128 each coordinate Fe cation.

This sequence belongs to the LuxS family. In terms of assembly, homodimer. Fe cation serves as cofactor.

It catalyses the reaction S-(5-deoxy-D-ribos-5-yl)-L-homocysteine = (S)-4,5-dihydroxypentane-2,3-dione + L-homocysteine. Involved in the synthesis of autoinducer 2 (AI-2) which is secreted by bacteria and is used to communicate both the cell density and the metabolic potential of the environment. The regulation of gene expression in response to changes in cell density is called quorum sensing. Catalyzes the transformation of S-ribosylhomocysteine (RHC) to homocysteine (HC) and 4,5-dihydroxy-2,3-pentadione (DPD). The protein is S-ribosylhomocysteine lyase of Shewanella oneidensis (strain ATCC 700550 / JCM 31522 / CIP 106686 / LMG 19005 / NCIMB 14063 / MR-1).